The primary structure comprises 759 residues: Protein MEI2-like 3 (759 aa).

2 consecutive RRM domains span residues arginine 166 to proline 239 and glycine 251 to proline 324.

Functionally, probable RNA-binding protein that plays a role in meiosis and vegetative growth. The protein is Protein MEI2-like 3 (ML3) of Arabidopsis thaliana (Mouse-ear cress).